The following is a 33-amino-acid chain: Photosystem II reaction center protein Psb30 (33 aa).

Residues 5–25 (VIAQLTVLSLIVLSGPLVIIL) traverse the membrane as a helical segment.

It belongs to the Psb30/Ycf12 family. In terms of assembly, PSII is composed of 1 copy each of membrane proteins PsbA, PsbB, PsbC, PsbD, PsbE, PsbF, PsbH, PsbI, PsbJ, PsbK, PsbL, PsbM, PsbT, PsbX, PsbY, PsbZ, Psb30/Ycf12, peripheral proteins of the oxygen-evolving complex and a large number of cofactors. It forms dimeric complexes.

The protein localises to the plastid. Its subcellular location is the chloroplast thylakoid membrane. Functionally, a core subunit of photosystem II (PSII), probably helps stabilize the reaction center. In Chlorokybus atmophyticus (Soil alga), this protein is Photosystem II reaction center protein Psb30.